Consider the following 820-residue polypeptide: LPS-assembly protein LptD (820 aa).

The interval 1–27 (MDLSSLPDPLRPTHSRLPARRRDRAEP) is disordered. Residues 13 to 22 (THSRLPARRR) are compositionally biased toward basic residues.

The protein belongs to the LptD family. As to quaternary structure, component of the lipopolysaccharide transport and assembly complex. Interacts with LptE and LptA.

In terms of biological role, together with LptE, is involved in the assembly of lipopolysaccharide (LPS) at the surface of the outer membrane. The polypeptide is LPS-assembly protein LptD (Paracidovorax citrulli (strain AAC00-1) (Acidovorax citrulli)).